The sequence spans 301 residues: dTDP-4-dehydrorhamnose reductase (301 aa).

NADH contacts are provided by residues 10–12 (GQV), Asp30, 39–40 (DF), and 63–65 (AHT). 11–12 (QV) lines the NADPH pocket. NADPH-binding positions include 39–40 (DF), 63–65 (AHT), and Tyr102. 104-105 (TD) is a dTDP-beta-L-rhamnose binding site. NADH is bound by residues Tyr129 and Lys133. NADPH-binding residues include Tyr129 and Lys133. The Proton donor/acceptor role is filled by Tyr129. Trp155 is a binding site for dTDP-beta-L-rhamnose.

This sequence belongs to the dTDP-4-dehydrorhamnose reductase family. As to quaternary structure, homodimer. The cofactor is Mg(2+).

The enzyme catalyses dTDP-beta-L-rhamnose + NADP(+) = dTDP-4-dehydro-beta-L-rhamnose + NADPH + H(+). It functions in the pathway carbohydrate biosynthesis; dTDP-L-rhamnose biosynthesis. It participates in bacterial outer membrane biogenesis; LPS O-antigen biosynthesis. In terms of biological role, involved in the biosynthesis of the dTDP-L-rhamnose which is an important component of lipopolysaccharide (LPS). Catalyzes the reduction of dTDP-6-deoxy-L-lyxo-4-hexulose to yield dTDP-L-rhamnose. RmlD uses NADH and NADPH nearly equally well. The chain is dTDP-4-dehydrorhamnose reductase from Escherichia coli.